The primary structure comprises 766 residues: Serine/threonine-protein kinase tousled-like 1 (766 aa).

Met1 carries the N-acetylmethionine modification. A compositionally biased stretch (polar residues) spans 1-19; that stretch reads MSVQSSSGSLEGPPSWSQL. Residues 1–197 are disordered; the sequence is MSVQSSSGSL…SPSPTALAFG (197 aa). Residues 20–33 show a composition bias toward low complexity; that stretch reads STSPTPGSAAAARS. A Phosphothreonine modification is found at Thr38. Positions 43-64 are enriched in basic and acidic residues; that stretch reads RPREGAMDELHSLDPRRQELLE. Phosphoserine occurs at positions 54, 77, and 80. Residues 68 to 85 are compositionally biased toward low complexity; that stretch reads TGVASGSTGSTGSCSVGA. Residues 87 to 103 are compositionally biased toward polar residues; sequence ASTNNESSNHSFGSLGS. Residues 105–121 are compositionally biased toward basic and acidic residues; sequence SDKESETPEKKQSESSR. Ser134, Ser159, Ser174, and Ser176 each carry phosphoserine. The segment covering 170–192 has biased composition (low complexity); the sequence is SPQNSHSHSTPSSSVRPNSPSPT. The stretch at 230-281 forms a coiled coil; that stretch reads QDLEKKEGRIDDLLRANCDLRRQIDEQQKLLEKYKERLNKCISMSKKLLIEK. Residues 346–383 form a disordered region; that stretch reads LAKRKPPTANNSQAPSTNSEPKQRKNKAVNGAENDPFV. Polar residues predominate over residues 353–365; that stretch reads TANNSQAPSTNSE. A coiled-coil region spans residues 397–445; it reads HEQEEIFKLRLGHLKKEEAEIQAELERLERVRNLHIRELKRINNEDNSQ. The region spanning 456 to 734 is the Protein kinase domain; that stretch reads YLLLHLLGRG…VHQLANDPYL (279 aa). Residues 462-470 and Lys485 contribute to the ATP site; that span reads LGRGGFSEV. Catalysis depends on Asp586, which acts as the Proton acceptor. At Ser743 the chain carries Phosphoserine.

It belongs to the protein kinase superfamily. Ser/Thr protein kinase family. As to quaternary structure, heterodimer with TLK2. Requires Mg(2+) as cofactor. Widely expressed. Present in fetal placenta, liver, kidney and pancreas but not heart or skeletal muscle. Also found in adult cell lines. Isoform 3 is ubiquitously expressed in all tissues examined.

It localises to the nucleus. It catalyses the reaction L-seryl-[protein] + ATP = O-phospho-L-seryl-[protein] + ADP + H(+). The enzyme catalyses L-threonyl-[protein] + ATP = O-phospho-L-threonyl-[protein] + ADP + H(+). With respect to regulation, cell-cycle regulated, maximal activity in S-phase. Inactivated by phosphorylation at Ser-743, potentially by CHEK1. Rapidly and transiently inhibited by phosphorylation following the generation of DNA double-stranded breaks during S-phase. This is cell cycle checkpoint and ATM-pathway dependent and appears to regulate processes involved in chromatin assembly. Isoform 3 phosphorylates and enhances the stability of the t-SNARE SNAP23, augmenting its assembly with syntaxin. Isoform 3 protects the cells from the ionizing radiation by facilitating the repair of DSBs. In vitro, phosphorylates histone H3 at 'Ser-10'. The protein is Serine/threonine-protein kinase tousled-like 1 (TLK1) of Homo sapiens (Human).